Reading from the N-terminus, the 439-residue chain is MNNVPNVEKQIGIDLYTTKTPGIGGKLRQQTEDFGVIEITNREEGTEGKYLILELTKRNWETHHLIRDLTRILRISQKRVGFAGTKDKRAVTTQKISIYDMEEEALQNVHLKDTELKILGRSNKSLELGDLTGNEFIITVRDIDLDEKELESRLSQTTASIKEQGGVPNFFGIQRFGALRPITHVVGESIVRNDIEKAAMAYIAASYPDEPEDTQEVRNRVFETKDYIEGLKGYPLQLRYERAMMHHLVSKPEDYAGSFETLPANIRKMFVHAYQSYIYNTIICSRIKKGLPLNRAVVGDIVCFKNKAGLPDKSRNERVTEDNIDGMNNLVKRNRAFVTAPLVGYSSELASGVPGEIEREVIEELNVPIEGFKVPSMEELSSKGLRREILLSTDPKYFIEEDELNEGKYRVTLDFSLPKGSYATTILREYMKVEPLKMS.

Asp-87 (nucleophile) is an active-site residue. The 226-residue stretch at 166–391 (GVPNFFGIQR…SKGLRREILL (226 aa)) folds into the TRUD domain.

Belongs to the pseudouridine synthase TruD family.

It carries out the reaction uridine(13) in tRNA = pseudouridine(13) in tRNA. In terms of biological role, could be responsible for synthesis of pseudouridine from uracil-13 in transfer RNAs. The polypeptide is Probable tRNA pseudouridine synthase D (Methanococcoides burtonii (strain DSM 6242 / NBRC 107633 / OCM 468 / ACE-M)).